The primary structure comprises 524 residues: Putative mediator of RNA polymerase II transcription subunit 8 (524 aa).

Coiled-coil stretches lie at residues 117–146 and 175–211; these read LKLH…SKHK and NAQQ…QQQQ. Disordered stretches follow at residues 312–340, 356–379, and 430–451; these read VASP…QPSI, LPNT…IGGG, and QQNQ…IQHL. Residues 314 to 333 are compositionally biased toward polar residues; sequence SPQQQVTSKQVPIQSTNKPL. The span at 356-374 shows a compositional bias: low complexity; sequence LPNTTSPPVNNNNQSPINS. Residues 398-478 are a coiled coil; it reads IQQQIQLQQQ…LQQQFQQQQL (81 aa).

It belongs to the Mediator complex subunit 8 family. Component of the Mediator complex. May be part of a multisubunit E3 ubiquitin-protein ligase complex.

The protein localises to the nucleus. It functions in the pathway protein modification; protein ubiquitination. In terms of biological role, component of the Mediator complex, a coactivator involved in the regulated transcription of nearly all RNA polymerase II-dependent genes. Mediator functions as a bridge to convey information from gene-specific regulatory proteins to the basal RNA polymerase II transcription machinery. Mediator is recruited to promoters by direct interactions with regulatory proteins and serves as a scaffold for the assembly of a functional preinitiation complex with RNA polymerase II and the general transcription factors. May play a role as a target recruitment subunit in E3 ubiquitin-protein ligase complexes and thus in ubiquitination and subsequent proteasomal degradation of target proteins. The polypeptide is Putative mediator of RNA polymerase II transcription subunit 8 (med8) (Dictyostelium discoideum (Social amoeba)).